A 193-amino-acid polypeptide reads, in one-letter code: ATP-dependent Clp protease proteolytic subunit 2 (193 aa).

S98 functions as the Nucleophile in the catalytic mechanism. The active site involves H123.

Belongs to the peptidase S14 family. In terms of assembly, fourteen ClpP subunits assemble into 2 heptameric rings which stack back to back to give a disk-like structure with a central cavity, resembling the structure of eukaryotic proteasomes.

The protein localises to the cytoplasm. It catalyses the reaction Hydrolysis of proteins to small peptides in the presence of ATP and magnesium. alpha-casein is the usual test substrate. In the absence of ATP, only oligopeptides shorter than five residues are hydrolyzed (such as succinyl-Leu-Tyr-|-NHMec, and Leu-Tyr-Leu-|-Tyr-Trp, in which cleavage of the -Tyr-|-Leu- and -Tyr-|-Trp bonds also occurs).. Functionally, cleaves peptides in various proteins in a process that requires ATP hydrolysis. Has a chymotrypsin-like activity. Plays a major role in the degradation of misfolded proteins. The sequence is that of ATP-dependent Clp protease proteolytic subunit 2 from Bacillus cereus (strain ATCC 14579 / DSM 31 / CCUG 7414 / JCM 2152 / NBRC 15305 / NCIMB 9373 / NCTC 2599 / NRRL B-3711).